An 88-amino-acid chain; its full sequence is Phosphocarrier protein HPr (88 aa).

In terms of domain architecture, HPr spans 1-88; it reads MVVKTVRVLN…RLFQNKFEEE (88 aa). Histidine 15 acts as the Pros-phosphohistidine intermediate in catalysis. The residue at position 46 (serine 46) is a Phosphoserine; by HPrK/P.

It belongs to the HPr family.

It is found in the cytoplasm. With respect to regulation, phosphorylation on Ser-46 inhibits the phosphoryl transfer from enzyme I to HPr. In terms of biological role, general (non sugar-specific) component of the phosphoenolpyruvate-dependent sugar phosphotransferase system (sugar PTS). This major carbohydrate active-transport system catalyzes the phosphorylation of incoming sugar substrates concomitantly with their translocation across the cell membrane. The phosphoryl group from phosphoenolpyruvate (PEP) is transferred to the phosphoryl carrier protein HPr by enzyme I. Phospho-HPr then transfers it to the PTS EIIA domain. The chain is Phosphocarrier protein HPr (ptsH) from Treponema pallidum (strain Nichols).